The primary structure comprises 473 residues: FAD-dependent monooxygenase ctvC (473 aa).

FAD-binding residues include Glu37, Ala51, and Arg110. The helical transmembrane segment at 218 to 238 (IGPGFTFLIFPAAGDSLFWVL) threads the bilayer. Residues Asp310 and Ala323 each contribute to the FAD site. Asn358 carries N-linked (GlcNAc...) asparagine glycosylation. The helical transmembrane segment at 451 to 471 (LVYCFGVVILLWISWAVFNVN) threads the bilayer.

It belongs to the paxM FAD-dependent monooxygenase family. It depends on FAD as a cofactor.

The protein resides in the membrane. It participates in mycotoxin biosynthesis. In terms of biological role, FAD-dependent monooxygenase; part of the gene cluster that mediates the biosynthesis of citreoviridin, an inhibitor of the of F1-ATPase beta-subunit. The HR-PKS ctvA accepts acetyl-CoA as the starter unit and catalyzes eight iterations of malonyl-CoA extension and four iterations of SAM-dependent methylation at C4, C12, C14, and C16. The KR and DH domains selectively act on the first six iterations to generate the hexaene chain. In the last three iterations, the KR and DH domains terminate their functions to yield a beta,delta-diketo ester moiety, which then undergoes intramolecular cyclization to yield an alpha-pyrone intermediate. Subsequently, ctvB methylates the alpha-pyrone hydroxyl group to generate citreomontanin. In order to form the tetrahydrofuran ring with the correct stereochemistry, the terminal alkenes of citreomontanin need to undergo isomerization to yield a (17Z)-hexaene, a step that could be catalyzed by ctvC. The (17Z)-hexaene then undergoes bisepoxidation by ctvC to form a (17R,16R,15S,14R)-bisepoxide moiety. Lastly, ctvD acts as a regioselective hydrolase to form the tetrahydrofuran ring with the substituents in the correct absolute configuration, completing the biosynthesis of citreoviridin. The protein is FAD-dependent monooxygenase ctvC of Aspergillus terreus (strain NIH 2624 / FGSC A1156).